Here is a 505-residue protein sequence, read N- to C-terminus: Monocarboxylate transporter 10 (505 aa).

A compositionally biased stretch (acidic residues) spans 1-14 (MTEPEPTLEQEPTP). The tract at residues 1–64 (MTEPEPTLEQ…EQKSPEEFEP (64 aa)) is disordered. The Cytoplasmic segment spans residues 1–66 (MTEPEPTLEQ…KSPEEFEPPE (66 aa)). The segment covering 15–31 (EPEPTQEPTPEPTPEPE) has biased composition (pro residues). Over residues 32 to 41 (PTQEPESEPE) the composition is skewed to acidic residues. The chain crosses the membrane as a helical span at residues 67–87 (GGWGWVVMLASMWCNGSVFGI). Over 88–114 (QNAFGIMFVYLLNEFGSEHDADLRFKT) the chain is Extracellular. A helical membrane pass occupies residues 115–135 (AWVGSLSMGMIFFCSPIVSVF). Residues 136–142 (TDLLGCR) lie on the Cytoplasmic side of the membrane. A helical transmembrane segment spans residues 143–163 (ITAVGGAAVGCVGLLASSFVT). Topologically, residues 164–171 (SLGPMYFT) are extracellular. A helical transmembrane segment spans residues 172–192 (YGIVFACGCSFAYQPSLVILG). Topologically, residues 193–204 (HYFKRRLGLVNG) are cytoplasmic. A helical membrane pass occupies residues 205–225 (IVTAGSSVFTITLPYMLSGLL). Residues 226–235 (KSVGLYHTLR) are Extracellular-facing. Residues 236–256 (VLAIFMFILMLAGLTYKPLLP) form a helical membrane-spanning segment. The Cytoplasmic segment spans residues 257–286 (KPVSSSKPGSRCPPLSRIFNVNIWKSLGYR). A helical membrane pass occupies residues 287–307 (IWAFGIPAALYGYFVPYVHLM). At 308 to 321 (THVEERFGPEANKE) the chain is on the extracellular side. A helical membrane pass occupies residues 322-342 (VLLACIGITSGVGRLIFGRVA). Asp-343 is a topological domain (cytoplasmic). Residues 344–364 (YVPGVNKVFLQVSSFMVIGVM) traverse the membrane as a helical segment. Topologically, residues 365 to 377 (SMMIPLCHVFGGL) are extracellular. A helical transmembrane segment spans residues 378–400 (IAVCLLMGLFDGCFICIMAPIAF). Over 401-411 (ELVGSQNVSQA) the chain is Cytoplasmic. A helical transmembrane segment spans residues 412–432 (IGFLLGMMSIPMTVGPPIAGF). The Extracellular portion of the chain corresponds to 433-443 (LRDRLGSYDVA). A helical membrane pass occupies residues 444-464 (FYLAGIPPLIGGAVLCAIPWV). The Cytoplasmic segment spans residues 465 to 505 (EARRKRREAANTAENTEKMLESRSPPLEDTVCRTEEPESVI). The disordered stretch occupies residues 474 to 505 (ANTAENTEKMLESRSPPLEDTVCRTEEPESVI). Over residues 494-505 (TVCRTEEPESVI) the composition is skewed to basic and acidic residues.

Belongs to the major facilitator superfamily. Monocarboxylate porter (TC 2.A.1.13) family.

It is found in the cell membrane. Its subcellular location is the basolateral cell membrane. The enzyme catalyses L-tryptophan(in) = L-tryptophan(out). The catalysed reaction is L-tyrosine(in) = L-tyrosine(out). It carries out the reaction L-phenylalanine(in) = L-phenylalanine(out). It catalyses the reaction 3,3',5-triiodo-L-thyronine(out) = 3,3',5-triiodo-L-thyronine(in). The enzyme catalyses L-thyroxine(out) = L-thyroxine(in). Functionally, sodium- and proton-independent thyroid hormones and aromatic acids transporter. Mediates both uptake and efflux of 3,5,3'-triiodothyronine (T3) and 3,5,3',5'-tetraiodothyronine (T4) with high affinity, suggesting a role in the homeostasis of thyroid hormone levels. Responsible for low affinity bidirectional transport of the aromatic amino acids, such as phenylalanine, tyrosine, tryptophan and L-3,4-dihydroxyphenylalanine (L-dopa). Plays an important role in homeostasis of aromatic amino acids. This chain is Monocarboxylate transporter 10 (slc16a10), found in Danio rerio (Zebrafish).